Reading from the N-terminus, the 316-residue chain is Probable prolyl 4-hydroxylase 7 (316 aa).

Over 1-4 (MDSR) the chain is Cytoplasmic. Residues 5-24 (IFLAFSLCFLFTLPLISSAP) traverse the membrane as a helical; Signal-anchor for type II membrane protein segment. The Lumenal portion of the chain corresponds to 25 to 316 (NRFLTRSSNT…CRKSCKACSS (292 aa)). N-linked (GlcNAc...) asparagine glycosylation occurs at Asn-96. The Fe2OG dioxygenase domain occupies 139-261 (NGESMQILHY…KWSATRWIHV (123 aa)). Residues His-157 and Asp-159 each coordinate Fe cation. A glycan (N-linked (GlcNAc...) asparagine) is linked at Asn-233. His-242 is a binding site for Fe cation. Lys-252 is a 2-oxoglutarate binding site. The ShKT domain occupies 274-314 (CMDENVSCEKWAKAGECQKNPTYMVGSDKDHGYCRKSCKAC). 3 cysteine pairs are disulfide-bonded: Cys-274–Cys-314, Cys-281–Cys-307, and Cys-290–Cys-311. N-linked (GlcNAc...) asparagine glycosylation occurs at Asn-278.

The protein belongs to the P4HA family. Fe(2+) serves as cofactor. It depends on L-ascorbate as a cofactor.

It is found in the endoplasmic reticulum membrane. The catalysed reaction is L-prolyl-[collagen] + 2-oxoglutarate + O2 = trans-4-hydroxy-L-prolyl-[collagen] + succinate + CO2. Functionally, catalyzes the post-translational formation of 4-hydroxyproline in -Xaa-Pro-Gly- sequences in proline-rich peptide sequences of plant glycoproteins and other proteins. Hydroxyprolines are important constituent of many plant cell wall glycoproteins such as extensins, hydroxyproline-rich glycoproteins, lectins and arabinogalactan proteins. In Arabidopsis thaliana (Mouse-ear cress), this protein is Probable prolyl 4-hydroxylase 7.